A 171-amino-acid polypeptide reads, in one-letter code: Adenine phosphoribosyltransferase (171 aa).

It belongs to the purine/pyrimidine phosphoribosyltransferase family. As to quaternary structure, homodimer.

The protein resides in the cytoplasm. It catalyses the reaction AMP + diphosphate = 5-phospho-alpha-D-ribose 1-diphosphate + adenine. It functions in the pathway purine metabolism; AMP biosynthesis via salvage pathway; AMP from adenine: step 1/1. Functionally, catalyzes a salvage reaction resulting in the formation of AMP, that is energically less costly than de novo synthesis. The chain is Adenine phosphoribosyltransferase from Synechococcus sp. (strain ATCC 27144 / PCC 6301 / SAUG 1402/1) (Anacystis nidulans).